We begin with the raw amino-acid sequence, 209 residues long: Protocatechuate 3,4-dioxygenase alpha chain (209 aa).

R142 lines the 3,4-dihydroxybenzoate pocket.

Belongs to the intradiol ring-cleavage dioxygenase family. The enzyme is an oligomer of 12 copies of the alpha and beta chains. It depends on Fe(3+) as a cofactor.

The catalysed reaction is 3,4-dihydroxybenzoate + O2 = 3-carboxy-cis,cis-muconate + 2 H(+). It participates in aromatic compound metabolism; beta-ketoadipate pathway; 3-carboxy-cis,cis-muconate from 3,4-dihydroxybenzoate: step 1/1. In terms of biological role, plays an essential role in the utilization of numerous aromatic and hydroaromatic compounds via the beta-ketoadipate pathway. This chain is Protocatechuate 3,4-dioxygenase alpha chain (pcaG), found in Acinetobacter baylyi (strain ATCC 33305 / BD413 / ADP1).